The sequence spans 896 residues: Myelin regulatory factor-like protein (896 aa).

Residues 111–403 (GLPHRTFHNC…SNPGQFENDI (293 aa)) constitute a DNA-binding region (NDT80). The Peptidase S74 domain occupies 449-557 (SDSRAKQNVQ…KLTNNLEERI (109 aa)). Residues 541–573 (GAVKQLCKLTNNLEERIEELEIWNRKLARLKRL) adopt a coiled-coil conformation. A helical membrane pass occupies residues 622–638 (VFQSLVITLIAVMAFCL). A compositionally biased stretch (polar residues) spans 648–658 (APSSNLTSSQE). Residues 648 to 672 (APSSNLTSSQEPALPSTASPSAPNT) form a disordered region. A compositionally biased stretch (low complexity) spans 659 to 672 (PALPSTASPSAPNT).

The protein belongs to the MRF family.

The protein resides in the membrane. In Bos taurus (Bovine), this protein is Myelin regulatory factor-like protein (MYRFL).